The primary structure comprises 209 residues: MKLRGLYAITDSQLLDDGRLLPYVEAALRGGARLLQYRDKSSDQARRLREAESLRELCERYGAQLIVNDDAELAARLGVGLHLGQTDGSLSAARALLGRQAIIGATCHARLELAEQAVAEGASYVAFGRFFNSSTKPGAPAASVELLDQARPRLHLPITAIGGISLDTAPGLIARGVDLVAVIHALFAAASAAEVERRARAFSALFEPA.

Residues 36–40 (QYRDK) and Asn-68 contribute to the 4-amino-2-methyl-5-(diphosphooxymethyl)pyrimidine site. Mg(2+)-binding residues include Asp-69 and Asp-87. Residue Thr-106 participates in 4-amino-2-methyl-5-(diphosphooxymethyl)pyrimidine binding. 133-135 (SST) is a binding site for 2-[(2R,5Z)-2-carboxy-4-methylthiazol-5(2H)-ylidene]ethyl phosphate. A 4-amino-2-methyl-5-(diphosphooxymethyl)pyrimidine-binding site is contributed by Lys-136. A 2-[(2R,5Z)-2-carboxy-4-methylthiazol-5(2H)-ylidene]ethyl phosphate-binding site is contributed by Gly-163.

This sequence belongs to the thiamine-phosphate synthase family. Mg(2+) serves as cofactor.

It catalyses the reaction 2-[(2R,5Z)-2-carboxy-4-methylthiazol-5(2H)-ylidene]ethyl phosphate + 4-amino-2-methyl-5-(diphosphooxymethyl)pyrimidine + 2 H(+) = thiamine phosphate + CO2 + diphosphate. The catalysed reaction is 2-(2-carboxy-4-methylthiazol-5-yl)ethyl phosphate + 4-amino-2-methyl-5-(diphosphooxymethyl)pyrimidine + 2 H(+) = thiamine phosphate + CO2 + diphosphate. It carries out the reaction 4-methyl-5-(2-phosphooxyethyl)-thiazole + 4-amino-2-methyl-5-(diphosphooxymethyl)pyrimidine + H(+) = thiamine phosphate + diphosphate. It functions in the pathway cofactor biosynthesis; thiamine diphosphate biosynthesis; thiamine phosphate from 4-amino-2-methyl-5-diphosphomethylpyrimidine and 4-methyl-5-(2-phosphoethyl)-thiazole: step 1/1. Its function is as follows. Condenses 4-methyl-5-(beta-hydroxyethyl)thiazole monophosphate (THZ-P) and 2-methyl-4-amino-5-hydroxymethyl pyrimidine pyrophosphate (HMP-PP) to form thiamine monophosphate (TMP). This is Thiamine-phosphate synthase from Pseudomonas aeruginosa (strain UCBPP-PA14).